Consider the following 181-residue polypeptide: ATP-dependent protease subunit HslV (181 aa).

Threonine 6 is an active-site residue. Na(+)-binding residues include alanine 162, cysteine 165, and threonine 168.

The protein belongs to the peptidase T1B family. HslV subfamily. As to quaternary structure, a double ring-shaped homohexamer of HslV is capped on each side by a ring-shaped HslU homohexamer. The assembly of the HslU/HslV complex is dependent on binding of ATP.

The protein localises to the cytoplasm. It catalyses the reaction ATP-dependent cleavage of peptide bonds with broad specificity.. With respect to regulation, allosterically activated by HslU binding. Functionally, protease subunit of a proteasome-like degradation complex believed to be a general protein degrading machinery. The protein is ATP-dependent protease subunit HslV of Solidesulfovibrio magneticus (strain ATCC 700980 / DSM 13731 / RS-1) (Desulfovibrio magneticus).